The primary structure comprises 73 residues: Acyl carrier protein homolog (73 aa).

The 72-residue stretch at 1 to 72 (MAIKEWIITQ…DIIVLIEQKS (72 aa)) folds into the Carrier domain. An O-(pantetheine 4'-phosphoryl)serine modification is found at serine 32.

4'-phosphopantetheine is transferred from CoA to a specific serine of the apo-ACP-like protein.

It participates in lipid metabolism; fatty acid biosynthesis. Functionally, carrier of the growing fatty acid chain in fatty acid biosynthesis. The polypeptide is Acyl carrier protein homolog (Mycoplasmopsis pulmonis (strain UAB CTIP) (Mycoplasma pulmonis)).